Here is a 138-residue protein sequence, read N- to C-terminus: Large ribosomal subunit protein bL17 (138 aa).

It belongs to the bacterial ribosomal protein bL17 family. In terms of assembly, part of the 50S ribosomal subunit. Contacts protein L32.

The sequence is that of Large ribosomal subunit protein bL17 from Nitrobacter hamburgensis (strain DSM 10229 / NCIMB 13809 / X14).